Reading from the N-terminus, the 120-residue chain is Ribosome-binding factor A (120 aa).

The protein belongs to the RbfA family. As to quaternary structure, monomer. Binds 30S ribosomal subunits, but not 50S ribosomal subunits or 70S ribosomes.

It localises to the cytoplasm. Its function is as follows. One of several proteins that assist in the late maturation steps of the functional core of the 30S ribosomal subunit. Associates with free 30S ribosomal subunits (but not with 30S subunits that are part of 70S ribosomes or polysomes). Required for efficient processing of 16S rRNA. May interact with the 5'-terminal helix region of 16S rRNA. The sequence is that of Ribosome-binding factor A from Verminephrobacter eiseniae (strain EF01-2).